Reading from the N-terminus, the 326-residue chain is Tetraacyldisaccharide 4'-kinase (326 aa).

An ATP-binding site is contributed by Ser-53–Thr-60.

Belongs to the LpxK family.

It catalyses the reaction a lipid A disaccharide + ATP = a lipid IVA + ADP + H(+). It functions in the pathway glycolipid biosynthesis; lipid IV(A) biosynthesis; lipid IV(A) from (3R)-3-hydroxytetradecanoyl-[acyl-carrier-protein] and UDP-N-acetyl-alpha-D-glucosamine: step 6/6. Functionally, transfers the gamma-phosphate of ATP to the 4'-position of a tetraacyldisaccharide 1-phosphate intermediate (termed DS-1-P) to form tetraacyldisaccharide 1,4'-bis-phosphate (lipid IVA). This chain is Tetraacyldisaccharide 4'-kinase, found in Actinobacillus pleuropneumoniae serotype 7 (strain AP76).